A 437-amino-acid polypeptide reads, in one-letter code: Elongation factor 1-gamma (437 aa).

Residue Ala-2 is modified to N-acetylalanine. The GST N-terminal domain maps to 2 to 87; sequence AAGTLYTYPE…YVSNEELRGS (86 aa). A GST C-terminal domain is found at 88–216; the sequence is TPEAAAQVVQ…VKLCEKMAQF (129 aa). Lys-147 and Lys-212 each carry N6-acetyllysine. Residues 221–254 show a composition bias toward basic and acidic residues; that stretch reads FAESQPKKDTPRKEKGSREEKQKPQAERKEEKKA. The interval 221-268 is disordered; sequence FAESQPKKDTPRKEKGSREEKQKPQAERKEEKKAAAPAPEEEMDECEQ. Lys-253 is covalently cross-linked (Glycyl lysine isopeptide (Lys-Gly) (interchain with G-Cter in SUMO1)). Residues 276–437 form the EF-1-gamma C-terminal domain; that stretch reads AKDPFAHLPK…KAFNQGKIFK (162 aa). A Glycyl lysine isopeptide (Lys-Gly) (interchain with G-Cter in SUMO2) cross-link involves residue Lys-285. Lys-401 carries the N6-acetyllysine modification. N6-acetyllysine; alternate is present on Lys-434. Lys-434 carries the N6-malonyllysine; alternate modification.

In terms of assembly, EF-1 is composed of four subunits: alpha, beta, delta, and gamma.

In terms of biological role, probably plays a role in anchoring the complex to other cellular components. This chain is Elongation factor 1-gamma (EEF1G), found in Equus caballus (Horse).